Reading from the N-terminus, the 428-residue chain is Dihydroorotase (428 aa).

Residues H56 and H58 each contribute to the Zn(2+) site. Substrate contacts are provided by residues 58–60 and N90; that span reads HLR. The Zn(2+) site is built by D150, H177, and H230. N276 contributes to the substrate binding site. D303 lines the Zn(2+) pocket. The active site involves D303. H307 is a substrate binding site.

This sequence belongs to the metallo-dependent hydrolases superfamily. DHOase family. Class I DHOase subfamily. Requires Zn(2+) as cofactor.

It catalyses the reaction (S)-dihydroorotate + H2O = N-carbamoyl-L-aspartate + H(+). It participates in pyrimidine metabolism; UMP biosynthesis via de novo pathway; (S)-dihydroorotate from bicarbonate: step 3/3. In terms of biological role, catalyzes the reversible cyclization of carbamoyl aspartate to dihydroorotate. This is Dihydroorotase from Streptomyces coelicolor (strain ATCC BAA-471 / A3(2) / M145).